Consider the following 156-residue polypeptide: Flagellar assembly factor FliW (156 aa).

It belongs to the FliW family. In terms of assembly, interacts with translational regulator CsrA and flagellin(s).

It localises to the cytoplasm. Its function is as follows. Acts as an anti-CsrA protein, binds CsrA and prevents it from repressing translation of its target genes, one of which is flagellin. Binds to flagellin and participates in the assembly of the flagellum. The sequence is that of Flagellar assembly factor FliW from Lachnoclostridium phytofermentans (strain ATCC 700394 / DSM 18823 / ISDg) (Clostridium phytofermentans).